A 1084-amino-acid chain; its full sequence is CRISPR-associated endonuclease Cas9 (1084 aa).

Asp-8 acts as the For RuvC-like nuclease domain in catalysis. The Mn(2+) site is built by Asp-8, Glu-496, and Glu-500. The 162-residue stretch at 504–665 folds into the HNH Cas9-type domain; that stretch reads TEKRAREMDG…MDEEIDARSM (162 aa). His-573 acts as the Proton acceptor for HNH nuclease domain in catalysis. His-727 provides a ligand contact to Mn(2+).

The protein belongs to the CRISPR-associated protein Cas9 family. Subtype II-C subfamily. As to quaternary structure, monomer. Binds crRNA and tracrRNA. It depends on Mg(2+) as a cofactor.

CRISPR (clustered regularly interspaced short palindromic repeat) is an adaptive immune system that provides protection against mobile genetic elements (viruses, transposable elements and conjugative plasmids). CRISPR clusters contain spacers, sequences complementary to antecedent mobile elements, and target invading nucleic acids. CRISPR clusters are transcribed and processed into CRISPR RNA (crRNA). In type II CRISPR systems correct processing of pre-crRNA requires a trans-encoded small RNA (tracrRNA), endogenous ribonuclease 3 (rnc) and this protein. The tracrRNA serves as a guide for ribonuclease 3-aided processing of pre-crRNA. Subsequently Cas9/crRNA/tracrRNA endonucleolytically cleaves linear or circular dsDNA target complementary to the spacer; Cas9 is inactive in the absence of the 2 guide RNAs (gRNA). Cas9 recognizes the protospacer adjacent motif (PAM) in the CRISPR repeat sequences to help distinguish self versus nonself, as targets within the bacterial CRISPR locus do not have PAMs. PAM recognition is also required for catalytic activity. The polypeptide is CRISPR-associated endonuclease Cas9 (Corynebacterium diphtheriae (strain ATCC 700971 / NCTC 13129 / Biotype gravis)).